The chain runs to 464 residues: ATP synthase subunit beta (464 aa).

150–157 (GGAGVGKT) contributes to the ATP binding site.

It belongs to the ATPase alpha/beta chains family. F-type ATPases have 2 components, CF(1) - the catalytic core - and CF(0) - the membrane proton channel. CF(1) has five subunits: alpha(3), beta(3), gamma(1), delta(1), epsilon(1). CF(0) has three main subunits: a(1), b(2) and c(9-12). The alpha and beta chains form an alternating ring which encloses part of the gamma chain. CF(1) is attached to CF(0) by a central stalk formed by the gamma and epsilon chains, while a peripheral stalk is formed by the delta and b chains.

The protein localises to the cell membrane. It carries out the reaction ATP + H2O + 4 H(+)(in) = ADP + phosphate + 5 H(+)(out). Produces ATP from ADP in the presence of a proton gradient across the membrane. The catalytic sites are hosted primarily by the beta subunits. The polypeptide is ATP synthase subunit beta (Dehalococcoides mccartyi (strain ATCC BAA-2266 / KCTC 15142 / 195) (Dehalococcoides ethenogenes (strain 195))).